A 506-amino-acid polypeptide reads, in one-letter code: Histidine--tRNA ligase, mitochondrial (506 aa).

A mitochondrion-targeting transit peptide spans Met-1–Cys-33. Phosphoserine is present on Ser-67. Residues Asp-131–Thr-133, Arg-158, Gln-174, Asp-178, Arg-327, and Tyr-331–Tyr-332 each bind L-histidine. Residue Lys-444 is modified to N6-acetyllysine.

The protein belongs to the class-II aminoacyl-tRNA synthetase family. Homodimer. In terms of tissue distribution, a high level expression is seen in the heart, kidney and skeletal muscle while a lower level expression is seen in the brain and liver.

It localises to the mitochondrion. The catalysed reaction is tRNA(His) + L-histidine + ATP = L-histidyl-tRNA(His) + AMP + diphosphate + H(+). Functionally, mitochondrial aminoacyl-tRNA synthetase that catalyzes the ATP-dependent ligation of histidine to the 3'-end of its cognate tRNA, via the formation of an aminoacyl-adenylate intermediate (His-AMP). This is Histidine--tRNA ligase, mitochondrial (HARS2) from Homo sapiens (Human).